The sequence spans 362 residues: DSTQALTTAWKEACASASPSTILVPKGNFAVGLITLEGPCKSSIGLQLQGTLKAPADPSKIKGLGWINLNKIDLLTIFGGGVFDGQGKSAWVQNDCHKNGPICKTLSMNLRLYAVTNSILRDVTTLDSKNFHVNVIGCKNLTFERFKISAAETSINTDGIHIGRSDGVNIINTEIKTGDDCISLGDGSKNINITNITCGPGHGISVGSLGRYKNEESVVGIYVKNCTITGSQNGVRIKTWPKSEPGEASEMHFQDITMNSVGTPILIDQGYCPYNQCTAEVPSSVKLSKISFKNIKGTSTTKEAVKLVCSKSFPCNGVELADIDLTYSGKGGPATSVCENIKPTIKGKQIPAICSGSAAKAA.

PbH1 repeat units follow at residues 138–164, 165–186, 188–208, and 218–239; these read CKNL…HIGR, SDGV…SLGD, SKNI…SVGS, and VVGI…RIKT. Asn-140 is a glycosylation site (N-linked (GlcNAc...) asparagine). The active-site Proton donor is Asp-179. Asn-192 and Asn-195 each carry an N-linked (GlcNAc...) asparagine glycan. The active site involves His-202. N-linked (GlcNAc...) asparagine glycosylation is present at Asn-225.

This sequence belongs to the glycosyl hydrolase 28 family. In terms of tissue distribution, pollen tubes growing through the style during pollination.

It localises to the secreted. The protein localises to the cell wall. The catalysed reaction is [(1-&gt;4)-alpha-D-galacturonosyl](n) + H2O = alpha-D-galacturonate + [(1-&gt;4)-alpha-D-galacturonosyl](n-1). Functionally, may function in depolymerizing pectin during pollen development, germination, and tube growth. Acts as an exo-polygalacturonase. This chain is Exopolygalacturonase, found in Oenothera organensis (Evening primrose).